We begin with the raw amino-acid sequence, 377 residues long: Glutamate 5-kinase (377 aa).

Lys22 lines the ATP pocket. The substrate site is built by Ser62, Asp149, and Asn161. Residues 181–182 (TD) and 223–229 (TGGMVTK) contribute to the ATP site. A PUA domain is found at 285-363 (RGTIVVDAGA…AQLKRFLGPQ (79 aa)).

It belongs to the glutamate 5-kinase family.

Its subcellular location is the cytoplasm. It catalyses the reaction L-glutamate + ATP = L-glutamyl 5-phosphate + ADP. It participates in amino-acid biosynthesis; L-proline biosynthesis; L-glutamate 5-semialdehyde from L-glutamate: step 1/2. Catalyzes the transfer of a phosphate group to glutamate to form L-glutamate 5-phosphate. The sequence is that of Glutamate 5-kinase from Bifidobacterium longum (strain DJO10A).